A 366-amino-acid chain; its full sequence is Ribosomal RNA large subunit methyltransferase M (366 aa).

S-adenosyl-L-methionine is bound by residues Ser-188, 221–224 (CPGG), Asp-240, Asp-260, and Asp-277. The active-site Proton acceptor is the Lys-306.

This sequence belongs to the class I-like SAM-binding methyltransferase superfamily. RNA methyltransferase RlmE family. RlmM subfamily. As to quaternary structure, monomer.

It is found in the cytoplasm. The catalysed reaction is cytidine(2498) in 23S rRNA + S-adenosyl-L-methionine = 2'-O-methylcytidine(2498) in 23S rRNA + S-adenosyl-L-homocysteine + H(+). Catalyzes the 2'-O-methylation at nucleotide C2498 in 23S rRNA. The sequence is that of Ribosomal RNA large subunit methyltransferase M from Shigella sonnei (strain Ss046).